The following is a 301-amino-acid chain: NAD kinase (301 aa).

The Proton acceptor role is filled by Asp73. NAD(+) contacts are provided by residues 73-74, 151-152, Arg179, Asp181, 192-197, Ala216, and Gln250; these read DG, ND, and TAYALS.

Belongs to the NAD kinase family. The cofactor is a divalent metal cation.

The protein localises to the cytoplasm. The enzyme catalyses NAD(+) + ATP = ADP + NADP(+) + H(+). Involved in the regulation of the intracellular balance of NAD and NADP, and is a key enzyme in the biosynthesis of NADP. Catalyzes specifically the phosphorylation on 2'-hydroxyl of the adenosine moiety of NAD to yield NADP. This chain is NAD kinase, found in Methylibium petroleiphilum (strain ATCC BAA-1232 / LMG 22953 / PM1).